Consider the following 86-residue polypeptide: Haditoxin (86 aa).

Positions 1 to 21 are cleaved as a signal peptide; it reads MKTLLLTLVVVTIVYLDLGYT. 4 cysteine pairs are disulfide-bonded: Cys24–Cys45, Cys38–Cys62, Cys66–Cys78, and Cys79–Cys84.

The protein belongs to the three-finger toxin family. Short-chain subfamily. Orphan group VIII (haditoxin) sub-subfamily. Homodimer; non-covalently linked. In terms of tissue distribution, expressed by the venom gland.

Its subcellular location is the secreted. Antagonist of muscle (alpha-1-beta-1-delta-epsilon/CHRNA1-CHRNB1-CHRND-CHRNE) and neuronal (alpha-7/CHRNA7, alpha-3-beta-2/CHRNA3-CHRNB2, alpha-4-beta-2/CHRNA4-CHRNB2) nicotinic acetylcholine receptors (nAChR). The highest affinity is for human alpha-7/CHRNA7 nAChRs (IC(50)=180 nM), compared to human alpha-1-beta-1-delta-epsilon/CHRNA1-CHRNB1-CHRND-CHRNE nAChR (IC(50)= 550 nM), alpha-3-beta-2/CHRNA3-CHRNB2 nAChR (IC(50)=500 nM), and alpha-4-beta-2/CHRNA4-CHRNB2 nAChR (IC(50)=2.6 uM). The chain is Haditoxin from Ophiophagus hannah (King cobra).